Consider the following 604-residue polypeptide: Aspartate--tRNA(Asp/Asn) ligase (604 aa).

Glutamate 175 provides a ligand contact to L-aspartate. The interval glutamine 199–lysine 202 is aspartate. L-aspartate-binding residues include arginine 221 and histidine 456. Arginine 221–glutamate 223 contributes to the ATP binding site. Glutamate 496 contacts ATP. L-aspartate is bound at residue arginine 503. Glycine 548 to arginine 551 contacts ATP.

This sequence belongs to the class-II aminoacyl-tRNA synthetase family. Type 1 subfamily. In terms of assembly, homodimer.

It is found in the cytoplasm. It catalyses the reaction tRNA(Asx) + L-aspartate + ATP = L-aspartyl-tRNA(Asx) + AMP + diphosphate. In terms of biological role, aspartyl-tRNA synthetase with relaxed tRNA specificity since it is able to aspartylate not only its cognate tRNA(Asp) but also tRNA(Asn). Reaction proceeds in two steps: L-aspartate is first activated by ATP to form Asp-AMP and then transferred to the acceptor end of tRNA(Asp/Asn). The polypeptide is Aspartate--tRNA(Asp/Asn) ligase (Methylobacterium sp. (strain 4-46)).